We begin with the raw amino-acid sequence, 501 residues long: MMPQYERKQIIIHISCVIICVVVTLTLFHVFWNDNYIAVDVNYDVPYNFSVSPDFGFNTTNITWSLKPYYKYDINDLMNTANSVFKIWSRTGLNFTYIKNVDEAMVRIYFYRQDHNDSFPFDGKGKILGHAFYPNRHRINRGLAGEVHIDADEQFYFNDKLENMSEYDDSINLHAILLHEVGHAIGLLHSANKSSIMYPYYGGSKLGVDDFNGIQQIYFANKYKHNKIFTYNKYHKLETTSSSTPSYYGNRDRYPINKKRSLSSVFNITTTTVKPSYDKNNTFTPQKICFNITSSYKTHNTKLTAIRKYCTGHIDTISVIRGELYIFVDEYHWRFRSNGLLYSGYPLKTTHSWSVPIIGRFKVTSAFETLTGDIVIGVNYTTFYYFDRMSMQLYRMQKLPLHLLPRCRSTKKTIVFSIDSHLYALCDRIIREIDFNSLRMKRMKTKRSMLGFPLVSNLITVLDHDGIYLFRNDNTYAEVIRSRVDSSSSYFKNNTDKWTIC.

Positions 1–26 (MMPQYERKQIIIHISCVIICVVVTLT) are cleaved as a signal peptide. Residues N48, N58, N61, N94, N116, and N163 are each glycosylated (N-linked (GlcNAc...) asparagine; by host). H179 provides a ligand contact to Zn(2+). Residue E180 is part of the active site. Residues H183 and H189 each contribute to the Zn(2+) site. N-linked (GlcNAc...) asparagine; by host glycans are attached at residues N192, N267, N280, and N291. The Hemopexin repeat unit spans residues 311-356 (TGHIDTISVIRGELYIFVDEYHWRFRSNGLLYSGYPLKTTHSWSVP). N-linked (GlcNAc...) asparagine; by host glycans are attached at residues N379 and N493.

Belongs to the peptidase M10A family. Zn(2+) is required as a cofactor.

In Trichoplusia ni ascovirus 2c (TnAV-2c), this protein is Putative matrix metalloproteinase.